A 226-amino-acid polypeptide reads, in one-letter code: Type-5 uracil-DNA glycosylase (226 aa).

4 residues coordinate [4Fe-4S] cluster: Cys-23, Cys-26, Cys-125, and Cys-140.

The protein belongs to the uracil-DNA glycosylase (UDG) superfamily. Type 5 (UDGb) family.

Functionally, DNA glycosylase with broad substrate specificity. Can remove uracil from double-stranded DNA containing either a U/G or U/A base pair. Can also process hydroxymethyluracil (mispaired with guanine or adenine), hypoxanthine and fluorouracil. Exhibits a clear preference for double-stranded DNA substrates, but can also process uracil in single-stranded DNA, with lower efficiency. The sequence is that of Type-5 uracil-DNA glycosylase from Pyrobaculum aerophilum (strain ATCC 51768 / DSM 7523 / JCM 9630 / CIP 104966 / NBRC 100827 / IM2).